A 103-amino-acid polypeptide reads, in one-letter code: Small ribosomal subunit protein uS10 (103 aa).

This sequence belongs to the universal ribosomal protein uS10 family. Part of the 30S ribosomal subunit.

Its function is as follows. Involved in the binding of tRNA to the ribosomes. In Pseudoalteromonas atlantica (strain T6c / ATCC BAA-1087), this protein is Small ribosomal subunit protein uS10.